We begin with the raw amino-acid sequence, 418 residues long: Glutamyl-tRNA reductase (418 aa).

Substrate-binding positions include 49-52 (TCNR), Ser108, 113-115 (EPQ), and Gln119. Cys50 (nucleophile) is an active-site residue. NADP(+) is bound at residue 188–193 (GAGETI).

The protein belongs to the glutamyl-tRNA reductase family. In terms of assembly, homodimer.

It carries out the reaction (S)-4-amino-5-oxopentanoate + tRNA(Glu) + NADP(+) = L-glutamyl-tRNA(Glu) + NADPH + H(+). It participates in porphyrin-containing compound metabolism; protoporphyrin-IX biosynthesis; 5-aminolevulinate from L-glutamyl-tRNA(Glu): step 1/2. In terms of biological role, catalyzes the NADPH-dependent reduction of glutamyl-tRNA(Glu) to glutamate 1-semialdehyde (GSA). This is Glutamyl-tRNA reductase from Aliivibrio salmonicida (strain LFI1238) (Vibrio salmonicida (strain LFI1238)).